A 102-amino-acid polypeptide reads, in one-letter code: Large ribosomal subunit protein bL21 (102 aa).

The protein belongs to the bacterial ribosomal protein bL21 family. As to quaternary structure, part of the 50S ribosomal subunit. Contacts protein L20.

This protein binds to 23S rRNA in the presence of protein L20. The chain is Large ribosomal subunit protein bL21 from Cutibacterium acnes (strain DSM 16379 / KPA171202) (Propionibacterium acnes).